A 125-amino-acid chain; its full sequence is Ribosome-binding factor A (125 aa).

The protein belongs to the RbfA family. As to quaternary structure, monomer. Binds 30S ribosomal subunits, but not 50S ribosomal subunits or 70S ribosomes.

It is found in the cytoplasm. One of several proteins that assist in the late maturation steps of the functional core of the 30S ribosomal subunit. Associates with free 30S ribosomal subunits (but not with 30S subunits that are part of 70S ribosomes or polysomes). Required for efficient processing of 16S rRNA. May interact with the 5'-terminal helix region of 16S rRNA. The chain is Ribosome-binding factor A from Xylella fastidiosa (strain M12).